Consider the following 481-residue polypeptide: Phospho-2-dehydro-3-deoxyheptonate aldolase (481 aa).

Residues 1–22 (MSQQTTPNAPGWAPDSWRSKPI) form a disordered region.

This sequence belongs to the class-II DAHP synthase family. In terms of assembly, homodimer. Post-translationally, the N-terminus is blocked.

It carries out the reaction D-erythrose 4-phosphate + phosphoenolpyruvate + H2O = 7-phospho-2-dehydro-3-deoxy-D-arabino-heptonate + phosphate. Its pathway is metabolic intermediate biosynthesis; chorismate biosynthesis; chorismate from D-erythrose 4-phosphate and phosphoenolpyruvate: step 1/7. This Neurospora crassa (strain ATCC 24698 / 74-OR23-1A / CBS 708.71 / DSM 1257 / FGSC 987) protein is Phospho-2-dehydro-3-deoxyheptonate aldolase (aro-8).